Consider the following 208-residue polypeptide: EF-hand protein 5 variant 2 (208 aa).

The tract at residues 1–35 (MQARGTVKVQGDANVDGKMSTGQHPHHQHLNSTQA) is disordered. EF-hand domains follow at residues 64 to 98 (MAEGFYVLSGGYKKLFIPSKDVYALMQNVGMHLTE), 99 to 134 (EEFHDALRVIGQSEPQNADELSFSDFLLLMTREVDD), 135 to 170 (TMADELRSAFFHYDKHKTGYVTRKQFTELFATLAER), and 171 to 206 (STPEELEELLAVAEVDETDDKIDYNRFVNELTSRVN). Ca(2+) contacts are provided by glutamate 118, aspartate 123, aspartate 148, threonine 152, and tyrosine 154.

This chain is EF-hand protein 5 variant 2, found in Trypanosoma cruzi.